We begin with the raw amino-acid sequence, 335 residues long: Putative SWIB domain-containing protein R508 (335 aa).

The span at 1 to 12 (MSKRVTSSKKSK) shows a compositional bias: basic residues. The tract at residues 1-182 (MSKRVTSSKK…NKKSPKKLLN (182 aa)) is disordered. Positions 24-33 (KNLSKTSKSV) are enriched in low complexity. The span at 60-75 (NIGGSKSSRTYNSEGS) shows a compositional bias: polar residues. Over residues 83–109 (SSKDSKVIKKNKQKVESSDSEKHSENK) the composition is skewed to basic and acidic residues. A compositionally biased stretch (basic residues) spans 110–126 (SHKKSSKSSSISRKKPI). The span at 163 to 173 (KGEDNNDEKQN) shows a compositional bias: basic and acidic residues. Residues 181–217 (LNEKKISSESFDDKLNELREELRENYIRQKKIMNDIK) adopt a coiled-coil conformation. Residues 244–326 (GFNKPQTVPQ…QTWLKKVYNE (83 aa)) enclose the SWIB/MDM2 domain.

This chain is Putative SWIB domain-containing protein R508, found in Acanthamoeba polyphaga mimivirus (APMV).